A 426-amino-acid chain; its full sequence is DNA primase DnaG (426 aa).

A Toprim domain is found at Asp171–Pro245. Mg(2+) is bound by residues Glu177, Asp219, and Asp221. The disordered stretch occupies residues Lys407–Pro426. Residues Gln413–Pro426 are compositionally biased toward polar residues.

Belongs to the archaeal DnaG primase family. In terms of assembly, forms a ternary complex with MCM helicase and DNA. Component of the archaeal exosome complex. It depends on Mg(2+) as a cofactor.

It catalyses the reaction ssDNA + n NTP = ssDNA/pppN(pN)n-1 hybrid + (n-1) diphosphate.. Functionally, RNA polymerase that catalyzes the synthesis of short RNA molecules used as primers for DNA polymerase during DNA replication. Also part of the exosome, which is a complex involved in RNA degradation. Acts as a poly(A)-binding protein that enhances the interaction between heteromeric, adenine-rich transcripts and the exosome. The protein is DNA primase DnaG of Thermofilum pendens (strain DSM 2475 / Hrk 5).